Reading from the N-terminus, the 629-residue chain is UvrABC system protein C (629 aa).

Residues 12 to 91 enclose the GIY-YIG domain; sequence DRPGCYLFKD…IKKHKPKYNI (80 aa). The UVR domain maps to 200 to 235; it reads QEVLERLRARMEQAAERLEFERAAELRDQIRAIEKV.

It belongs to the UvrC family. In terms of assembly, interacts with UvrB in an incision complex.

Its subcellular location is the cytoplasm. Its function is as follows. The UvrABC repair system catalyzes the recognition and processing of DNA lesions. UvrC both incises the 5' and 3' sides of the lesion. The N-terminal half is responsible for the 3' incision and the C-terminal half is responsible for the 5' incision. The chain is UvrABC system protein C from Symbiobacterium thermophilum (strain DSM 24528 / JCM 14929 / IAM 14863 / T).